A 404-amino-acid polypeptide reads, in one-letter code: Cysteine desulfurase IscS (404 aa).

Pyridoxal 5'-phosphate is bound by residues 75-76 (AT), asparagine 155, glutamine 183, and 203-205 (SAH). Position 206 is an N6-(pyridoxal phosphate)lysine (lysine 206). Threonine 243 serves as a coordination point for pyridoxal 5'-phosphate. The active-site Cysteine persulfide intermediate is cysteine 328. Cysteine 328 serves as a coordination point for [2Fe-2S] cluster.

This sequence belongs to the class-V pyridoxal-phosphate-dependent aminotransferase family. NifS/IscS subfamily. In terms of assembly, homodimer. Forms a heterotetramer with IscU, interacts with other sulfur acceptors. Pyridoxal 5'-phosphate serves as cofactor.

The protein localises to the cytoplasm. It catalyses the reaction (sulfur carrier)-H + L-cysteine = (sulfur carrier)-SH + L-alanine. The protein operates within cofactor biosynthesis; iron-sulfur cluster biosynthesis. Functionally, master enzyme that delivers sulfur to a number of partners involved in Fe-S cluster assembly, tRNA modification or cofactor biosynthesis. Catalyzes the removal of elemental sulfur atoms from cysteine to produce alanine. Functions as a sulfur delivery protein for Fe-S cluster synthesis onto IscU, an Fe-S scaffold assembly protein, as well as other S acceptor proteins. This chain is Cysteine desulfurase IscS, found in Neisseria meningitidis serogroup C (strain 053442).